The primary structure comprises 159 residues: Cyclic pyranopterin monophosphate synthase (159 aa).

Substrate contacts are provided by residues 75 to 77 (LCH) and 113 to 114 (ME). The active site involves Asp128.

Belongs to the MoaC family. As to quaternary structure, homohexamer; trimer of dimers.

The enzyme catalyses (8S)-3',8-cyclo-7,8-dihydroguanosine 5'-triphosphate = cyclic pyranopterin phosphate + diphosphate. Its pathway is cofactor biosynthesis; molybdopterin biosynthesis. Catalyzes the conversion of (8S)-3',8-cyclo-7,8-dihydroguanosine 5'-triphosphate to cyclic pyranopterin monophosphate (cPMP). The sequence is that of Cyclic pyranopterin monophosphate synthase from Photorhabdus laumondii subsp. laumondii (strain DSM 15139 / CIP 105565 / TT01) (Photorhabdus luminescens subsp. laumondii).